A 563-amino-acid chain; its full sequence is E3 ubiquitin-protein ligase IpaH2.5 (563 aa).

The segment at 1 to 270 (MIKSTNIQVI…PDYSGPQIFF (270 aa)) is interaction with target proteins. LRR repeat units lie at residues 69 to 90 (LQNQ…PDLP), 91 to 115 (PQIT…MLKV), 117 to 130 (HAQF…PALP), 131 to 150 (ETLE…PFLP), 151 to 170 (ENLT…PLLP), 171 to 195 (PELK…KLEG), 197 to 209 (ALAN…LPEL), and 210 to 233 (PFSM…VLRL). The tract at residues 271–281 (SMGNSATISAP) is linker. Residues 282 to 563 (EHSLADAVTA…YRQLTDEVLA (282 aa)) form an E3 ubiquitin-protein ligase catalytic domain region. Positions 284–563 (SLADAVTAWF…YRQLTDEVLA (280 aa)) constitute an NEL domain. Residue C368 is the Glycyl thioester intermediate of the active site.

It belongs to the LRR-containing bacterial E3 ligase family. As to quaternary structure, interacts with human RBCK1/HOIL-1 and RNF31/HOIP components of the LUBAC complex. Post-translationally, ubiquitinated in the presence of host E1 ubiquitin-activating enzyme, E2 ubiquitin-conjugating enzyme and ubiquitin.

It localises to the secreted. The protein localises to the host cytoplasm. It carries out the reaction S-ubiquitinyl-[E2 ubiquitin-conjugating enzyme]-L-cysteine + [acceptor protein]-L-lysine = [E2 ubiquitin-conjugating enzyme]-L-cysteine + N(6)-ubiquitinyl-[acceptor protein]-L-lysine.. The protein operates within protein modification; protein ubiquitination. Its activity is regulated as follows. Exists in an autoinhibited state in the absence of substrate protein, probably due to interactions of the leucine-rich repeat domain with the catalytic domain. Is activated upon binding to a substrate protein. Its function is as follows. E3 ubiquitin-protein ligase effector that inhibits host cell innate immunity during bacterial infection by catalyzing 'Lys-48'-linked polyubiquitination and subsequent degradation of host RNF31/HOIP. Host RNF31/HOIP is the catalytic component of the LUBAC complex, which conjugates linear ('Met-1'-linked) polyubiquitin chains at the surface of bacteria invading the host cytosol to form the ubiquitin coat surrounding bacteria. The bacterial ubiquitin coat acts as an 'eat-me' signal for xenophagy and promotes NF-kappa-B activation. The polypeptide is E3 ubiquitin-protein ligase IpaH2.5 (Shigella flexneri).